Consider the following 192-residue polypeptide: Phosphoheptose isomerase (192 aa).

In terms of domain architecture, SIS spans 34 to 192; the sequence is VVDAYRAGNK…VERELFLKGN (159 aa). Substrate is bound at residue 49–51; the sequence is NGG. His-58 and Glu-62 together coordinate Zn(2+). Substrate-binding positions include Glu-62, 91 to 92, 117 to 119, Ser-122, and Gln-169; these read ND and STS. Zn(2+)-binding residues include Gln-169 and His-177.

Belongs to the SIS family. GmhA subfamily. As to quaternary structure, homotetramer. Requires Zn(2+) as cofactor.

The protein localises to the cytoplasm. It catalyses the reaction 2 D-sedoheptulose 7-phosphate = D-glycero-alpha-D-manno-heptose 7-phosphate + D-glycero-beta-D-manno-heptose 7-phosphate. It functions in the pathway carbohydrate biosynthesis; D-glycero-D-manno-heptose 7-phosphate biosynthesis; D-glycero-alpha-D-manno-heptose 7-phosphate and D-glycero-beta-D-manno-heptose 7-phosphate from sedoheptulose 7-phosphate: step 1/1. In terms of biological role, catalyzes the isomerization of sedoheptulose 7-phosphate in D-glycero-D-manno-heptose 7-phosphate. The protein is Phosphoheptose isomerase of Geobacter sp. (strain M21).